We begin with the raw amino-acid sequence, 437 residues long: Epsilon-sarcoglycan (437 aa).

At 1-317 (MQLPRWWELG…LKSRDYYTDF (317 aa)) the chain is on the extracellular side. Asparagine 200 carries N-linked (GlcNAc...) asparagine glycosylation. A helical membrane pass occupies residues 318–338 (LITLAVPSAVALVLFLILAYI). The Cytoplasmic portion of the chain corresponds to 339–437 (MCCRREGVEK…QQQTTGKWYP (99 aa)).

The protein belongs to the sarcoglycan alpha/epsilon family. N-glycosylated. Post-translationally, ubiquitinated, leading to its degradation by the proteasome. As to expression, ubiquitous.

Its subcellular location is the cell membrane. The protein localises to the sarcolemma. It localises to the cytoplasm. The protein resides in the cytoskeleton. It is found in the cell projection. Its subcellular location is the dendrite. The protein localises to the golgi apparatus. Component of the sarcoglycan complex, a subcomplex of the dystrophin-glycoprotein complex which forms a link between the F-actin cytoskeleton and the extracellular matrix. This Homo sapiens (Human) protein is Epsilon-sarcoglycan (SGCE).